Consider the following 492-residue polypeptide: Glutamyl-tRNA(Gln) amidotransferase subunit A (492 aa).

Active-site charge relay system residues include K78 and S158. S182 (acyl-ester intermediate) is an active-site residue.

It belongs to the amidase family. GatA subfamily. In terms of assembly, heterotrimer of A, B and C subunits.

The enzyme catalyses L-glutamyl-tRNA(Gln) + L-glutamine + ATP + H2O = L-glutaminyl-tRNA(Gln) + L-glutamate + ADP + phosphate + H(+). Its function is as follows. Allows the formation of correctly charged Gln-tRNA(Gln) through the transamidation of misacylated Glu-tRNA(Gln) in organisms which lack glutaminyl-tRNA synthetase. The reaction takes place in the presence of glutamine and ATP through an activated gamma-phospho-Glu-tRNA(Gln). The sequence is that of Glutamyl-tRNA(Gln) amidotransferase subunit A from Rhodopseudomonas palustris (strain BisB5).